The primary structure comprises 432 residues: Glutamate-1-semialdehyde 2,1-aminomutase (432 aa).

At Lys-270 the chain carries N6-(pyridoxal phosphate)lysine.

This sequence belongs to the class-III pyridoxal-phosphate-dependent aminotransferase family. HemL subfamily. Homodimer. Pyridoxal 5'-phosphate serves as cofactor.

The protein resides in the cytoplasm. The catalysed reaction is (S)-4-amino-5-oxopentanoate = 5-aminolevulinate. The protein operates within porphyrin-containing compound metabolism; protoporphyrin-IX biosynthesis; 5-aminolevulinate from L-glutamyl-tRNA(Glu): step 2/2. The protein is Glutamate-1-semialdehyde 2,1-aminomutase of Acinetobacter baumannii (strain ACICU).